We begin with the raw amino-acid sequence, 183 residues long: MSAARESHPHGVKRSASPDDDLGSSNWEAADLGNEERKQKFLRLMGAGKKEHTGRLVIGDHKSTSHFRTGEEDKKINEELESQYQQSMDSKLSGRYRRHCGLGFSEVEDHDGEGDVAGDDDDNDDDSPDPESPDDSESDSESEKEESAEELQAAEHPDEVEDPKNKKDAKSNYKMMFVKSSGS.

Positions 1-183 (MSAARESHPH…KMMFVKSSGS (183 aa)) are disordered. K13 is covalently cross-linked (Glycyl lysine isopeptide (Lys-Gly) (interchain with G-Cter in SUMO2)). A phosphoserine mark is found at S15 and S17. Basic and acidic residues predominate over residues 48 to 78 (GKKEHTGRLVIGDHKSTSHFRTGEEDKKINE). K62 is covalently cross-linked (Glycyl lysine isopeptide (Lys-Gly) (interchain with G-Cter in SUMO2)). S63 is subject to Phosphoserine. A Glycyl lysine isopeptide (Lys-Gly) (interchain with G-Cter in SUMO2) cross-link involves residue K75. Residues S87, S127, and S147 each carry the phosphoserine modification. The span at 106–149 (EVEDHDGEGDVAGDDDDNDDDSPDPESPDDSESDSESEKEESAE) shows a compositional bias: acidic residues. A compositionally biased stretch (basic and acidic residues) spans 153 to 171 (AAEHPDEVEDPKNKKDAKS). N6-acetyllysine occurs at positions 174 and 179.

This sequence belongs to the SMAP family.

The sequence is that of Small acidic protein (SMAP) from Pongo abelii (Sumatran orangutan).